Reading from the N-terminus, the 363-residue chain is Translocating chain-associated membrane protein 1-like 1 (363 aa).

Residues 1-29 (MGLRKKNARNPPVLSHEFMVQNHADMVSC) are Cytoplasmic-facing. A helical transmembrane segment spans residues 30 to 50 (VGMFFVLGLMFEGTSEMSIAF). The Lumenal segment spans residues 51 to 80 (LTLQHGVVVPAEGLPSGSRTLYHYGVKDLA). A helical membrane pass occupies residues 81–101 (TVFFYMLVAIIIHATIQEYVL). At 102-120 (DKLSRRLQLTKGKQNKLNE) the chain is on the cytoplasmic side. A TLC domain is found at 116–324 (NKLNEAGQLS…TVWLQRWLED (209 aa)). A helical membrane pass occupies residues 121–141 (AGQLSVFYIVSGIWGMIILAS). At 142 to 159 (ENCLSDPTLLWKSQPHNM) the chain is on the lumenal side. Residues 160 to 179 (MTFQMKFFYISQLAYWFHSF) traverse the membrane as a helical segment. Topologically, residues 180–191 (PELYFQKVRKQD) are cytoplasmic. A helical membrane pass occupies residues 192–214 (IPGQLIYIGLHLFHIGGAYLLYL). Residues 215–218 (NHLG) are Lumenal-facing. A helical transmembrane segment spans residues 219-241 (LLLLMLHYAVELLSSVCSLLYFG). The Cytoplasmic segment spans residues 242–250 (DERYQKGLS). A helical membrane pass occupies residues 251–271 (LWPIVFISGRLVTLIVSVVTV). Topologically, residues 272 to 295 (GLHLAGTNRNGNALSGNVNVLAAK) are lumenal. The helical transmembrane segment at 296-316 (IAVLSSSCSIQVYITWTLTTV) threads the bilayer. Topologically, residues 317–363 (WLQRWLEDANLHVCGRKRRSRARKGTENGVENPNRIDSPPKKKEKAP) are cytoplasmic. Residues 338 to 363 (ARKGTENGVENPNRIDSPPKKKEKAP) are disordered. A compositionally biased stretch (basic and acidic residues) spans 354 to 363 (SPPKKKEKAP).

It belongs to the TRAM family.

The protein resides in the endoplasmic reticulum membrane. In terms of biological role, stimulatory or required for the translocation of secretory proteins across the ER membrane. The polypeptide is Translocating chain-associated membrane protein 1-like 1 (Tram1l1) (Mus musculus (Mouse)).